The following is a 340-amino-acid chain: MSFENAVIGATASSLANIAVYPLDLAKTLVQTQLKDEFVEAGEEAGEERAGSRRQNRIKPIALRSPQAAEQYKGALDALQRIYGAEGVAGLYRGLGSSTVAGFIQSFSYFFWYTLVRKHYFRLKQARGGDARFSTPEELVLGIVAAATSQLFVNPINVVATRQQTRGQAAGAADMRTVAREVHAENGWRGFWAGLKVSLVLTVNPSITYATYERLREALFPTPAAASHLVDSAALLSPGQNFVMGVLSKIVSTVLTQPLIIAKASLQRSGSCFQDFHQVLHHLYSTEGPLSLWKGLGPQITKGVLVQGLLFMFKGELTKMLRKLMFYLALLRSSRRALKG.

Solcar repeat units lie at residues 4–119 (ENAV…VRKH), 133–218 (FSTP…LREA), and 236–320 (LSPG…LTKM). 6 helical membrane-spanning segments follow: residues 6 to 26 (AVIGATASSLANIAVYPLDLA), 96 to 116 (GSSTVAGFIQSFSYFFWYTLV), 139 to 159 (LVLGIVAAATSQLFVNPINVV), 190 to 210 (GFWAGLKVSLVLTVNPSITYA), 242 to 262 (FVMGVLSKIVSTVLTQPLIIA), and 293 to 313 (WKGLGPQITKGVLVQGLLFMF).

The protein belongs to the mitochondrial carrier (TC 2.A.29) family.

It is found in the peroxisome membrane. Its function is as follows. Adenine nucleotide transporter involved in the uniport of ATP and adenine nucleotide hetero-exchange transport between the cytosol and the peroxisomal lumen. This transport is accompanied by a proton transport from the peroxisomal lumen to the cytosol. Transport of ATP into the peroxisome is required for beta-oxidation of medium-chain fatty acids. This is Peroxisomal adenine nucleotide transporter 1 (ANT1) from Eremothecium gossypii (strain ATCC 10895 / CBS 109.51 / FGSC 9923 / NRRL Y-1056) (Yeast).